The primary structure comprises 635 residues: Extracellular metalloproteinase 9 (635 aa).

Residues 1–19 (MHGLLLAAGLLTLPLRALA) form the signal peptide. The propeptide occupies 20 to 246 (HPGHQSTSIL…IHGVTDYVAD (227 aa)). N-linked (GlcNAc...) asparagine glycosylation occurs at N274. The tract at residues 279–307 (TWHSDGNTRYPTTRGNNGIAQDNPSGGTG) is disordered. Residue N413 is glycosylated (N-linked (GlcNAc...) asparagine). H430 lines the Zn(2+) pocket. Residue E431 is part of the active site. H434 is a Zn(2+) binding site. N475 carries an N-linked (GlcNAc...) asparagine glycan.

It belongs to the peptidase M36 family. It depends on Zn(2+) as a cofactor.

The protein localises to the secreted. Secreted metalloproteinase that allows assimilation of proteinaceous substrates. The sequence is that of Extracellular metalloproteinase 9 (MEP9) from Uncinocarpus reesii (strain UAMH 1704).